We begin with the raw amino-acid sequence, 703 residues long: Zinc finger CCCH domain-containing protein 36 (703 aa).

Disordered stretches follow at residues 1–42 (MAGG…DPNG), 112–176 (LQLH…MKNK), 204–242 (VSGS…AGSS), and 442–481 (HGTL…SSSQ). Positions 9-25 (GLPAAGEAAKAGRVGVG) are enriched in low complexity. The span at 112-125 (LQLHGDEKYQKKAG) shows a compositional bias: basic and acidic residues. The segment covering 149 to 169 (VSQSPPDSNALSSQRFGSSSP) has biased composition (polar residues). Residues 176 to 203 (KTRKRTCTFYAQGRCKNGKSCTFLHEGE) form a C3H1-type zinc finger. The segment covering 451–468 (TPDKDASHHKGADFDKGG) has biased composition (basic and acidic residues). Positions 470–481 (SRSTLHVSSSSQ) are enriched in low complexity.

The polypeptide is Zinc finger CCCH domain-containing protein 36 (Oryza sativa subsp. japonica (Rice)).